The chain runs to 181 residues: Isopentenyl-diphosphate Delta-isomerase (181 aa).

His-25 and His-32 together coordinate Mn(2+). The region spanning Pro-30–Met-164 is the Nudix hydrolase domain. Cys-67 is an active-site residue. His-69 serves as a coordination point for Mn(2+). Glu-87 contacts Mg(2+). Mn(2+)-binding residues include Glu-114 and Glu-116. Glu-116 is a catalytic residue.

The protein belongs to the IPP isomerase type 1 family. As to quaternary structure, homodimer. It depends on Mg(2+) as a cofactor. Mn(2+) is required as a cofactor.

It is found in the cytoplasm. The catalysed reaction is isopentenyl diphosphate = dimethylallyl diphosphate. Its pathway is isoprenoid biosynthesis; dimethylallyl diphosphate biosynthesis; dimethylallyl diphosphate from isopentenyl diphosphate: step 1/1. Its function is as follows. Catalyzes the 1,3-allylic rearrangement of the homoallylic substrate isopentenyl (IPP) to its highly electrophilic allylic isomer, dimethylallyl diphosphate (DMAPP). The chain is Isopentenyl-diphosphate Delta-isomerase from Salmonella paratyphi B (strain ATCC BAA-1250 / SPB7).